We begin with the raw amino-acid sequence, 198 residues long: Na(+)-translocating NADH-quinone reductase subunit E (198 aa).

Helical transmembrane passes span 11 to 31 (SIFI…FLAV), 35 to 55 (VSTA…AVPA), 77 to 97 (FLNF…LEMI), 110 to 130 (GIFL…SFMV), 140 to 160 (VVYG…LAGI), and 176 to 196 (LGIT…FSGI).

This sequence belongs to the NqrDE/RnfAE family. As to quaternary structure, composed of six subunits; NqrA, NqrB, NqrC, NqrD, NqrE and NqrF.

It localises to the cell inner membrane. The catalysed reaction is a ubiquinone + n Na(+)(in) + NADH + H(+) = a ubiquinol + n Na(+)(out) + NAD(+). NQR complex catalyzes the reduction of ubiquinone-1 to ubiquinol by two successive reactions, coupled with the transport of Na(+) ions from the cytoplasm to the periplasm. NqrA to NqrE are probably involved in the second step, the conversion of ubisemiquinone to ubiquinol. The protein is Na(+)-translocating NADH-quinone reductase subunit E of Glaesserella parasuis serovar 5 (strain SH0165) (Haemophilus parasuis).